Consider the following 213-residue polypeptide: AN1-type zinc finger protein 5 (213 aa).

The segment at 8 to 42 (TPGPMLCSTGCGFYGNPRTNGMCSVCYKEHLQRQQ) adopts an A20-type zinc-finger fold. Residues C14, C18, C30, and C33 each coordinate Zn(2+). The tract at residues 39–149 (QRQQNSGRMS…EEKAPELPKP (111 aa)) is disordered. Over residues 40-66 (RQQNSGRMSPMGTASGSNSPTSDSASV) the composition is skewed to polar residues. Phosphoserine occurs at positions 48 and 58. Positions 120–138 (SEPVVTQPSPSVSQPSSSQ) are enriched in low complexity. Residues 139-148 (SEEKAPELPK) show a composition bias toward basic and acidic residues. Residues 148-194 (KPKKNRCFMCRKKVGLTGFDCRCGNLFCGLHRYSDKHNCPYDYKAEA) form an AN1-type zinc finger. The Zn(2+) site is built by C154, C157, C168, C170, C175, H178, H184, and C186. An N6-acetyllysine modification is found at K209.

Homooligomer and/or heterooligomer. Interacts (via A20-type domain) with IKBKG and RIPK1 and with TRAF6 (via AN1-type domain). Interacts with ubiquitin and polyubiquitinated proteins. Identified in a heterotrimeric complex with ubiquitin and SQSTM1, where ZFAND5 and SQSTM1 both interact with the same ubiquitin molecule.

It localises to the cytoplasm. Functionally, involved in protein degradation via the ubiquitin-proteasome system. May act by anchoring ubiquitinated proteins to the proteasome. Plays a role in ubiquitin-mediated protein degradation during muscle atrophy. Plays a role in the regulation of NF-kappa-B activation and apoptosis. Inhibits NF-kappa-B activation triggered by overexpression of RIPK1 and TRAF6 but not of RELA. Also inhibits tumor necrosis factor (TNF), IL-1 and TLR4-induced NF-kappa-B activation in a dose-dependent manner. Overexpression sensitizes cells to TNF-induced apoptosis. Is a potent inhibitory factor for osteoclast differentiation. The chain is AN1-type zinc finger protein 5 (Zfand5) from Rattus norvegicus (Rat).